The sequence spans 431 residues: Enolase (431 aa).

Residue Q167 coordinates (2R)-2-phosphoglycerate. E209 serves as the catalytic Proton donor. D246, E290, and D317 together coordinate Mg(2+). Residues K342, R371, S372, and K393 each contribute to the (2R)-2-phosphoglycerate site. K342 functions as the Proton acceptor in the catalytic mechanism.

Belongs to the enolase family. In terms of assembly, component of the RNA degradosome, a multiprotein complex involved in RNA processing and mRNA degradation. Mg(2+) serves as cofactor.

It is found in the cytoplasm. The protein localises to the secreted. The protein resides in the cell surface. It catalyses the reaction (2R)-2-phosphoglycerate = phosphoenolpyruvate + H2O. The protein operates within carbohydrate degradation; glycolysis; pyruvate from D-glyceraldehyde 3-phosphate: step 4/5. Its function is as follows. Catalyzes the reversible conversion of 2-phosphoglycerate (2-PG) into phosphoenolpyruvate (PEP). It is essential for the degradation of carbohydrates via glycolysis. The polypeptide is Enolase (Erwinia tasmaniensis (strain DSM 17950 / CFBP 7177 / CIP 109463 / NCPPB 4357 / Et1/99)).